Here is a 353-residue protein sequence, read N- to C-terminus: Inactive ADP-ribosyltransferase ARH2 (353 aa).

Serine 27 bears the Phosphoserine mark.

This sequence belongs to the ADP-ribosylglycohydrolase family. As to expression, expressed in the embryonic heart at E11.5.

Its subcellular location is the cytoplasm. It is found in the myofibril. The protein localises to the sarcomere. In terms of biological role, required for myofibril assembly and outgrowth of the cardiac chambers in the developing heart. Appears to be catalytically inactive, showing no activity against O-acetyl-ADP-ribose. The chain is Inactive ADP-ribosyltransferase ARH2 (Adprhl1) from Mus musculus (Mouse).